The following is a 968-amino-acid chain: Serine/threonine-protein kinase apg-1 (968 aa).

Residues 24 to 329 (FVIDQEIGKG…FEDLFNHPVV (306 aa)) enclose the Protein kinase domain. Residues 30-38 (IGKGSFAKV) and Lys-53 each bind ATP. Asp-167 acts as the Proton acceptor in catalysis. Disordered stretches follow at residues 334-500 (PGLV…ERAA), 528-585 (MYPQ…LGTS), 884-906 (LPKR…LSDE), and 939-968 (ASKA…SVPA). 3 stretches are compositionally biased toward basic and acidic residues: residues 350–361 (LKEERPVSRAED), 371–380 (LRKDLADREG), and 417–431 (PRED…KEAA). Composition is skewed to polar residues over residues 441–452 (VQPSTSAPTRPS), 528–538 (MYPQQPQSPKS), and 545–557 (ATQQ…TSGA).

Belongs to the protein kinase superfamily. Ser/Thr protein kinase family. APG1/unc-51/ULK1 subfamily. In terms of assembly, homodimer. Forms a ternary complex with ATG13 and ATG17.

The protein localises to the cytoplasm. Its subcellular location is the preautophagosomal structure membrane. The catalysed reaction is L-seryl-[protein] + ATP = O-phospho-L-seryl-[protein] + ADP + H(+). It catalyses the reaction L-threonyl-[protein] + ATP = O-phospho-L-threonyl-[protein] + ADP + H(+). Functionally, serine/threonine protein kinase involved in the cytoplasm to vacuole transport (Cvt) and found to be essential in autophagy, where it is required for the formation of autophagosomes. Involved in the clearance of protein aggregates which cannot be efficiently cleared by the proteasome. Required for selective autophagic degradation of the nucleus (nucleophagy) as well as for mitophagy which contributes to regulate mitochondrial quantity and quality by eliminating the mitochondria to a basal level to fulfill cellular energy requirements and preventing excess ROS production. Also involved in endoplasmic reticulum-specific autophagic process, in selective removal of ER-associated degradation (ERAD) substrates. Plays a key role in ATG9 and ATG23 cycling through the pre-autophagosomal structure and is necessary to promote ATG18 binding to ATG9 through phosphorylation of ATG9. Catalyzes phosphorylation of ATG4, decreasing the interaction between ATG4 and ATG8 and impairing deconjugation of PE-conjugated forms of ATG8. The protein is Serine/threonine-protein kinase apg-1 of Neurospora crassa (strain ATCC 24698 / 74-OR23-1A / CBS 708.71 / DSM 1257 / FGSC 987).